Consider the following 224-residue polypeptide: Proline/serine-rich protein C17A5.10 (224 aa).

Over residues Met-1 to Ser-10 the composition is skewed to pro residues. A disordered region spans residues Met-1–Tyr-110. Over residues Thr-31–Ser-52 the composition is skewed to low complexity. Composition is skewed to polar residues over residues Leu-53–Ser-68, Pro-77–Tyr-94, and Ser-101–Tyr-110.

The protein belongs to the HUA1 family.

Its subcellular location is the cytoplasm. May be involved in assembly and disassembly of the actin cytoskeleton. This Schizosaccharomyces pombe (strain 972 / ATCC 24843) (Fission yeast) protein is Proline/serine-rich protein C17A5.10.